We begin with the raw amino-acid sequence, 216 residues long: Ras-related protein RABE1d (216 aa).

A GTP-binding site is contributed by G22 to S29. Positions F44–F52 match the Effector region motif. Residues D70–Q74, N128–D131, and S159–A160 each bind GTP. Positions T196–V216 are disordered. The segment covering T200–V216 has biased composition (low complexity). 2 S-geranylgeranyl cysteine lipidation sites follow: C212 and C213.

This sequence belongs to the small GTPase superfamily. Rab family. As to quaternary structure, interacts with PI5K2.

Its subcellular location is the golgi apparatus membrane. It is found in the cell membrane. In terms of biological role, involved in membrane trafficking from the Golgi to the plasma membrane. This chain is Ras-related protein RABE1d (RABE1D), found in Arabidopsis thaliana (Mouse-ear cress).